Consider the following 352-residue polypeptide: 3-isopropylmalate dehydrogenase (352 aa).

NAD(+) is bound at residue 76-89 (GPKWENLPHEHKPE). 4 residues coordinate substrate: R96, R106, R134, and D219. 3 residues coordinate Mg(2+): D219, D243, and D247. Position 276-288 (276-288 (GSAPDIAGQNKAN)) interacts with NAD(+).

It belongs to the isocitrate and isopropylmalate dehydrogenases family. LeuB type 1 subfamily. Homodimer. The cofactor is Mg(2+). Mn(2+) serves as cofactor.

The protein localises to the cytoplasm. It carries out the reaction (2R,3S)-3-isopropylmalate + NAD(+) = 4-methyl-2-oxopentanoate + CO2 + NADH. It participates in amino-acid biosynthesis; L-leucine biosynthesis; L-leucine from 3-methyl-2-oxobutanoate: step 3/4. In terms of biological role, catalyzes the oxidation of 3-carboxy-2-hydroxy-4-methylpentanoate (3-isopropylmalate) to 3-carboxy-4-methyl-2-oxopentanoate. The product decarboxylates to 4-methyl-2 oxopentanoate. This is 3-isopropylmalate dehydrogenase from Chlorobium chlorochromatii (strain CaD3).